The chain runs to 955 residues: 2-oxoglutarate dehydrogenase E1 component (955 aa).

This sequence belongs to the alpha-ketoglutarate dehydrogenase family. In terms of assembly, homodimer. Part of the 2-oxoglutarate dehydrogenase (OGDH) complex composed of E1 (2-oxoglutarate dehydrogenase), E2 (dihydrolipoamide succinyltransferase) and E3 (dihydrolipoamide dehydrogenase); the complex contains multiple copies of the three enzymatic components (E1, E2 and E3). Requires thiamine diphosphate as cofactor.

The enzyme catalyses N(6)-[(R)-lipoyl]-L-lysyl-[protein] + 2-oxoglutarate + H(+) = N(6)-[(R)-S(8)-succinyldihydrolipoyl]-L-lysyl-[protein] + CO2. E1 component of the 2-oxoglutarate dehydrogenase (OGDH) complex which catalyzes the decarboxylation of 2-oxoglutarate, the first step in the conversion of 2-oxoglutarate to succinyl-CoA and CO(2). The polypeptide is 2-oxoglutarate dehydrogenase E1 component (Bacillus cereus (strain 03BB102)).